Here is a 264-residue protein sequence, read N- to C-terminus: General transcription factor IIF subunit 2 (264 aa).

Belongs to the TFIIF beta subunit family. Heterodimer of an alpha and a beta subunit.

Its subcellular location is the nucleus. TFIIF is a general transcription initiation factor that binds to RNA polymerase II and helps to recruit it to the initiation complex in collaboration with TFIIB. The chain is General transcription factor IIF subunit 2 (gtf2f2) from Xenopus laevis (African clawed frog).